Here is a 363-residue protein sequence, read N- to C-terminus: Cytoplasmic tRNA 2-thiolation protein 1 (363 aa).

Positions aspartate 337–phenylalanine 363 are disordered.

The protein belongs to the TtcA family. CTU1/NCS6/ATPBD3 subfamily.

It is found in the cytoplasm. The protein operates within tRNA modification; 5-methoxycarbonylmethyl-2-thiouridine-tRNA biosynthesis. Functionally, plays a central role in 2-thiolation of mcm(5)S(2)U at tRNA wobble positions of tRNA(Lys), tRNA(Glu) and tRNA(Gln). Directly binds tRNAs and probably acts by catalyzing adenylation of tRNAs, an intermediate required for 2-thiolation. It is unclear whether it acts as a sulfurtransferase that transfers sulfur from thiocarboxylated URM1 onto the uridine of tRNAs at wobble position. This chain is Cytoplasmic tRNA 2-thiolation protein 1, found in Oryza sativa subsp. japonica (Rice).